A 396-amino-acid chain; its full sequence is Phosphoglycerate kinase (396 aa).

Substrate contacts are provided by residues 21 to 23 (DFN), Arg-36, 59 to 62 (HLGR), Arg-118, and Arg-151. Residues Lys-201, Gly-292, Glu-323, and 349-352 (GGDS) each bind ATP.

It belongs to the phosphoglycerate kinase family. In terms of assembly, monomer.

Its subcellular location is the cytoplasm. The catalysed reaction is (2R)-3-phosphoglycerate + ATP = (2R)-3-phospho-glyceroyl phosphate + ADP. It functions in the pathway carbohydrate degradation; glycolysis; pyruvate from D-glyceraldehyde 3-phosphate: step 2/5. This is Phosphoglycerate kinase from Leptospira interrogans serogroup Icterohaemorrhagiae serovar Lai (strain 56601).